The following is a 150-amino-acid chain: Transcriptional repressor NrdR (150 aa).

A zinc finger lies at 3–33; it reads CPYCTGESAVIDTRELDNGETIRRRRRCKHC. Residues 48–138 form the ATP-cone domain; sequence VMVVKKNGDR…VYRSFSDLGK (91 aa).

Belongs to the NrdR family. Zn(2+) is required as a cofactor.

In terms of biological role, negatively regulates transcription of bacterial ribonucleotide reductase nrd genes and operons by binding to NrdR-boxes. The protein is Transcriptional repressor NrdR of Herpetosiphon aurantiacus (strain ATCC 23779 / DSM 785 / 114-95).